Here is an 888-residue protein sequence, read N- to C-terminus: Glutamate receptor 3 (888 aa).

A signal peptide spans 1-22; sequence MGQSVLRAVFFLVLGLLGHSHG. The Extracellular portion of the chain corresponds to 23–546; that stretch reads GFPNTISIGG…GVFSFLDPLA (524 aa). N-linked (GlcNAc...) asparagine glycosylation is found at Asn57, Asn260, Asn374, Asn409, and Asn416. Cys85 and Cys334 are disulfide-bonded. Residues Pro502, Thr504, and Arg509 each coordinate L-glutamate. The chain crosses the membrane as a helical span at residues 547 to 567; sequence YEIWMCIVFAYIGVSVVLFLV. The Cytoplasmic segment spans residues 568–596; the sequence is SRFSPYEWHLEDNNEEPRDPQSPPDPPNE. The helical; Pore-forming intramembrane region spans 597–612; that stretch reads FGIFNSLWFSLGAFMQ. Residues 613–615 lie within the membrane without spanning it; sequence QGC. Cys615 is lipidated: S-palmitoyl cysteine. Residues 616 to 621 lie on the Cytoplasmic side of the membrane; that stretch reads DISPRS. A helical membrane pass occupies residues 622–642; it reads LSGRIVGGVWWFFTLIIISSY. Over 643 to 817 the chain is Extracellular; the sequence is TANLAAFLTV…DKTSALSLSN (175 aa). 3 residues coordinate L-glutamate: Ser680, Thr681, and Glu731. Cys744 and Cys799 are oxidised to a cystine. The chain crosses the membrane as a helical span at residues 818 to 838; sequence VAGVFYILVGGLGLAMMVALI. Over 839 to 888 the chain is Cytoplasmic; the sequence is EFCYKSRAESKRMKLTKNTQNFKPAPATNTQNYATYREGYNVYGTESVKI. Cys841 is lipidated: S-palmitoyl cysteine. Phosphotyrosine occurs at positions 871 and 881.

This sequence belongs to the glutamate-gated ion channel (TC 1.A.10.1) family. GRIA3 subfamily. Homotetramer or heterotetramer of pore-forming glutamate receptor subunits. Tetramers may be formed by the dimerization of dimers. Interacts with PICK1, GRIP1 and GRIP2. Found in a complex with GRIA1, GRIA2, GRIA4, CNIH2, CNIH3, CACNG2, CACNG3, CACNG4, CACNG5, CACNG7 and CACNG8. Interacts with CACNG5. Found in a complex with GRIA1, GRIA2, GRIA4, DLG4, CACNG8 and CNIH2.

The protein resides in the cell membrane. The protein localises to the postsynaptic cell membrane. Its subcellular location is the postsynaptic density membrane. It carries out the reaction Ca(2+)(in) = Ca(2+)(out). Ionotropic glutamate receptor that functions as a ligand-gated cation channel, gated by L-glutamate and glutamatergic agonists such as alpha-amino-3-hydroxy-5-methyl-4-isoxazolepropionic acid (AMPA), quisqualic acid, and kainic acid. L-glutamate acts as an excitatory neurotransmitter at many synapses in the central nervous system and plays an important role in fast excitatory synaptic transmission by inducing long-term potentiation. Binding of the excitatory neurotransmitter L-glutamate induces a conformation change, leading to the opening of the cation channel, and thereby converts the chemical signal to an electrical impulse upon entry of calcium. The receptor then desensitizes rapidly and enters a transient inactive state, characterized by the presence of bound agonist. In the presence of CACNG8, shows resensitization which is characterized by a delayed accumulation of current flux upon continued application of glutamate. This Mus musculus (Mouse) protein is Glutamate receptor 3.